We begin with the raw amino-acid sequence, 89 residues long: Small ribosomal subunit protein uS15 (89 aa).

The protein belongs to the universal ribosomal protein uS15 family. As to quaternary structure, part of the 30S ribosomal subunit. Forms a bridge to the 50S subunit in the 70S ribosome, contacting the 23S rRNA.

Functionally, one of the primary rRNA binding proteins, it binds directly to 16S rRNA where it helps nucleate assembly of the platform of the 30S subunit by binding and bridging several RNA helices of the 16S rRNA. In terms of biological role, forms an intersubunit bridge (bridge B4) with the 23S rRNA of the 50S subunit in the ribosome. In Kocuria rhizophila (strain ATCC 9341 / DSM 348 / NBRC 103217 / DC2201), this protein is Small ribosomal subunit protein uS15.